Here is a 26-residue protein sequence, read N- to C-terminus: Dermaseptin-J2 (26 aa).

Val-26 is subject to Valine amide.

As to expression, expressed by the skin glands.

The protein resides in the secreted. In terms of biological role, has antimicrobial activity. This chain is Dermaseptin-J2, found in Phasmahyla jandaia (Jandaia leaf frog).